A 230-amino-acid chain; its full sequence is Ion-translocating oxidoreductase complex subunit E (230 aa).

The next 5 membrane-spanning stretches (helical) occupy residues 39–59 (LGLGIATLLVLVGSNVTVSLI), 69–89 (IPVFVMIIASLVTCVQLLMNA), 93–113 (GLYLSLGIFIPLIVTNCIIIG), 125–145 (LPAALDGFWMGMGMTTVLVVL), and 182–202 (SFLLALLPPGAFIGVGLLIAL).

It belongs to the NqrDE/RnfAE family. In terms of assembly, the complex is composed of six subunits: RnfA, RnfB, RnfC, RnfD, RnfE and RnfG.

Its subcellular location is the cell inner membrane. Functionally, part of a membrane-bound complex that couples electron transfer with translocation of ions across the membrane. The chain is Ion-translocating oxidoreductase complex subunit E from Vibrio vulnificus (strain YJ016).